We begin with the raw amino-acid sequence, 436 residues long: Putative actin-fragmin kinase DDB_G0268748 (436 aa).

The segment at 14-58 is disordered; it reads DKNIDSGSSSSNIGGSSSNSSGTTNKRSSGNFNGSSASSSPSSST. Residues 18 to 57 are compositionally biased toward low complexity; that stretch reads DSGSSSSNIGGSSSNSSGTTNKRSSGNFNGSSASSSPSSS.

This sequence belongs to the protein kinase superfamily. AFK Ser/Thr protein kinase family.

The sequence is that of Putative actin-fragmin kinase DDB_G0268748 from Dictyostelium discoideum (Social amoeba).